The following is a 151-amino-acid chain: uncharacterized protein (151 aa).

This is an uncharacterized protein from Escherichia coli.